A 226-amino-acid polypeptide reads, in one-letter code: Lipoprotein-releasing system ATP-binding protein LolD (226 aa).

The ABC transporter domain maps to 6–226 (VLISGLTKTF…KLYKGNLEEV (221 aa)). ATP is bound at residue 42 to 49 (GESGSGKS).

The protein belongs to the ABC transporter superfamily. Lipoprotein translocase (TC 3.A.1.125) family. In terms of assembly, the complex is composed of two ATP-binding proteins (LolD) and two transmembrane proteins (LolC and LolE).

It is found in the cell inner membrane. In terms of biological role, part of the ABC transporter complex LolCDE involved in the translocation of mature outer membrane-directed lipoproteins, from the inner membrane to the periplasmic chaperone, LolA. Responsible for the formation of the LolA-lipoprotein complex in an ATP-dependent manner. This chain is Lipoprotein-releasing system ATP-binding protein LolD, found in Treponema denticola (strain ATCC 35405 / DSM 14222 / CIP 103919 / JCM 8153 / KCTC 15104).